The primary structure comprises 211 residues: Small ribosomal subunit protein uS3 (211 aa).

The KH type-2 domain maps to 16–85 (IDEYFKGKLV…NPQIEVKPLE (70 aa)).

It belongs to the universal ribosomal protein uS3 family. As to quaternary structure, part of the 30S ribosomal subunit.

Its function is as follows. Binds the lower part of the 30S subunit head. The protein is Small ribosomal subunit protein uS3 of Methanococcus vannielii (strain ATCC 35089 / DSM 1224 / JCM 13029 / OCM 148 / SB).